The primary structure comprises 140 residues: MEETSLFINFETLDLARVYLFGGVKYLDLLLVLSIIDVLTGVIKAWKFKKLRSRSAWFGYVRKLLNFFAVILANVIDTVLNLNGVLTFGTVLFYIANEGLSITENLAQIGVKIPSSITDRLQTIENEKEQSKNNADKAAG.

The next 2 helical transmembrane spans lie at 26–43 (YLDLLLVLSIIDVLTGVI) and 64–86 (LLNFFAVILANVIDTVLNLNGVL).

It belongs to the bacteriophage holin family. Cp-1 holin subfamily.

It is found in the cell membrane. This is an uncharacterized protein from Bacillus subtilis (strain 168).